The primary structure comprises 434 residues: MGRVQLFEIRLSQGRVVYSPGEPLAGAVHLRLGAPLPFRAIRVTCMGSCGVSNKANDGAWVVEESYFNSSLSLADKGSLPPGEHNFPFQFLLPATAPTSFEGPFGKIVHQVRASIDTPRFSKDHKCSLVFYILSPLNLNSIPDIEQPNVASTTKKFSYKLVKTGSVVLTASTDLRGYVVGQVLRLQADIENQSGKDTSPVVASLLQKVSYKAKRWIYDVRTIAEVEGTGVKAWRHAQWQEQILVPALPQSALPGCSLIHIDYYLQVSMKAPEATVTLPLFVGNIAVNQTPLSPCPGPGSSPGLLSPVVPSAPPQEEAEAVASGPHFSDPVSLSTKSHSQQQPLSTTLGSVSVTTIEPCVQVGSPARHSLHPPLCISIGATVPYFAEGSGGPVPTTSALILPPEYSSWGYPYEAPPSYEQSCGAGGTDVGLIPGS.

The interval 295 to 345 (PGPGSSPGLLSPVVPSAPPQEEAEAVASGPHFSDPVSLSTKSHSQQQPLST) is disordered. A compositionally biased stretch (polar residues) spans 330–342 (VSLSTKSHSQQQP). 2 consecutive short sequence motifs (PPxY motif) follow at residues 401-404 (PPEY) and 414-417 (PPSY).

This sequence belongs to the arrestin family. As to quaternary structure, interacts (via PPxY motifs) with ITCH (via WW domains); the interaction is direct and participates in the recruitment of the ubiquitin-protein ligase ITCH to the NOTCH1 receptor. Interacts with ARRB1 and ARRB2; the interaction is direct. Interacts with TSG101; may recruit TSG101 to the plasma membrane. Interacts (via PPxY motifs) with WWP2 (via WW domains); ubiquitinates ARRDC1. Interacts with SLC11A2; controls the incorporation of SLC11A2 into extracellular vesicles through an ubiquitination-dependent mechanism. Interacts with WWP1 (via WW domains). Interacts with NEDD4 (via WW domains). Interacts with PDCD6IP. Ubiquitinated. Ubiquitination by WWP2; promotes localization to extracellular microvesicles. Ubiquitinated by WWP1.

The protein localises to the cell membrane. Functions as an adapter recruiting ubiquitin-protein ligases to their specific substrates. Through an ubiquitination-dependent mechanism plays for instance a role in the incorporation of SLC11A2 into extracellular vesicles. More generally, plays a role in the extracellular transport of proteins between cells through the release in the extracellular space of microvesicles. By participating in the ITCH-mediated ubiquitination and subsequent degradation of NOTCH1, negatively regulates the NOTCH signaling pathway. This Rattus norvegicus (Rat) protein is Arrestin domain-containing protein 1.